A 359-amino-acid chain; its full sequence is S-geranylgeranyl-glutathione receptor P2RY8 (359 aa).

Over 1-19 (MQVPNSTGPDNATLQMLRN) the chain is Extracellular. N-linked (GlcNAc...) asparagine glycans are attached at residues Asn-5 and Asn-11. The chain crosses the membrane as a helical span at residues 20–40 (PAIAVALPVVYSLVAAVSIPG). Over 41-57 (NLFSLWVLCRRMGPRSP) the chain is Cytoplasmic. The chain crosses the membrane as a helical span at residues 58–78 (SVIFMINLSVTDLMLASVLPF). Topologically, residues 79–88 (QIYYHCNRHH) are extracellular. Residues 89–109 (WVFGVLLCNVVTVAFYANMYS) traverse the membrane as a helical segment. The Cytoplasmic segment spans residues 110-138 (SILTMTCISVERFLGVLYPLSSKRWRRRR). The chain crosses the membrane as a helical span at residues 139 to 159 (YAVAACAGTWLLLLTALSPLA). The Extracellular segment spans residues 160 to 187 (RTDLTYPVHALGIITCFDVLKWTMLPSV). The chain crosses the membrane as a helical span at residues 188–208 (AMWAVFLFTIFILLFLIPFVI). At 209–237 (TVACYTATILKLLRTEEAHGREQRRRAVG) the chain is on the cytoplasmic side. A helical transmembrane segment spans residues 238–258 (LAAVVLLAFVTCFAPNNFVLL). Residues 259–275 (AHIVSRLFYGKSYYHVY) lie on the Extracellular side of the membrane. The chain crosses the membrane as a helical span at residues 276–296 (KLTLCLSCLNNCLDPFVYYFA). At 297-359 (SREFQLRLRE…PGLQRQESVF (63 aa)) the chain is on the cytoplasmic side. Positions 329-359 (RTTSVRSEAGAHPEGMEGATRPGLQRQESVF) are disordered.

The protein belongs to the G-protein coupled receptor 1 family. Barely detectable in normal blood leukocytes. Weaker expression was seen in heart, kidney and lung. Not detected in brain. Expressed in B cells and follicular helper T cells in germinal centers (at protein level).

It localises to the cell membrane. In terms of biological role, g protein-coupled receptor for S-geranylgeranyl-glutathione (GGG), an endogenous metabolite present in lymphoid tissues. Couples the binding of GGG to the activation of GNA13 and downstream repression of AKT activation in lymphocytes defining their positioning and growth within lymphoid organs. In lymphoid follicles, confines B cells and follicular helper T cells in germinal centers (GCs) in response to GGG local gradients established by GGT5 (via GGG catabolism) and ABCC1 (via extracellular transport) with lower concentrations of GGG found in the follicular dendritic cell network region around which germinal centers are formed. In the bone marrow, also in response to GGG gradients established by GGT5 and ABCC1, it restricts chemotactic transmigration of B cells, T cells and NK cells from blood vessels to the bone marrow parenchyma. Contributes to GNA13-dependent pathway that suppresses GC B cell growth. The polypeptide is S-geranylgeranyl-glutathione receptor P2RY8 (Homo sapiens (Human)).